Consider the following 623-residue polypeptide: Protein EDS1 (623 aa).

The residue at position 2 (Ala2) is an N-acetylalanine. Ser123 serves as the catalytic Nucleophile. Active-site charge relay system residues include Asp187 and His317. The stretch at 358 to 383 (VQAALEEEKKRVENQKKIIQVIEQER) forms a coiled coil.

Homodimer. Interacts with RPS4, RPS6, SNC1, SRFR1, AvrRps4 and HopA1. Part of a nuclear complex made of EDS1, PAD4 and SAG101, that can be redirected to the cytoplasm in the presence of an extranuclear form of EDS1. Interacts (via N-terminus) with PAD4 (via N-terminus). Interacts (via N-terminus) with SAG101. EDS1-SAG101 and EDS1-PAD4 form separate complexes in pathogen-unchallenged cells. Part of a nuclear protein complex made of VICTR, PAD4 and EDS1. Interacts with VICTR.

The protein resides in the nucleus. The protein localises to the cytoplasm. Its subcellular location is the microsome. Functionally, positive regulator of basal resistance and of effector-triggered immunity specifically mediated by TIR-NB-LRR (TNL) resistance proteins. Disruption by bacterial effector of EDS1-TIR-NB-LRR resistance protein interactions constitutes the first step in resistance activation. Acts redundantly with salicylic acid to regulate resistance gene-mediated signaling. Triggers early plant defenses and hypersensitive response independently of PAD4, and then recruits PAD4 to potentiate plant defenses through the accumulation of salicylic acid. Nuclear localization is essential for basal and TNL-conditioned immunity and for reprogramming defense gene expression, while cytoplasmic EDS1 is required to induce a complete immune response. Heterodimerization with PAD4 and/or SGA101 is necessary for TNL-mediated effector-triggered immunity. Contributes to nonhost resistance against E.amylovora. Loss of EDS1-PAD4 interaction compromises basal but not TNL-triggered resistance. Necessary for systemic acquired resistance (SAR) signal generation and perception. Has no direct lipase activity. Putative lipase activity is dispensable for immune functions. The chain is Protein EDS1 from Arabidopsis thaliana (Mouse-ear cress).